We begin with the raw amino-acid sequence, 234 residues long: Lipoprotein-releasing system ATP-binding protein LolD 1 (234 aa).

The region spanning 5-231 (IEARGIEKVF…RLTSNVRDPG (227 aa)) is the ABC transporter domain. Residue 41 to 48 (GASGSGKS) participates in ATP binding.

The protein belongs to the ABC transporter superfamily. Lipoprotein translocase (TC 3.A.1.125) family. In terms of assembly, the complex is composed of two ATP-binding proteins (LolD) and two transmembrane proteins (LolC and LolE).

It localises to the cell inner membrane. Part of the ABC transporter complex LolCDE involved in the translocation of mature outer membrane-directed lipoproteins, from the inner membrane to the periplasmic chaperone, LolA. Responsible for the formation of the LolA-lipoprotein complex in an ATP-dependent manner. This chain is Lipoprotein-releasing system ATP-binding protein LolD 1, found in Caulobacter vibrioides (strain ATCC 19089 / CIP 103742 / CB 15) (Caulobacter crescentus).